Here is a 180-residue protein sequence, read N- to C-terminus: ATP synthase subunit b 2 (180 aa).

A helical membrane pass occupies residues 33–53; that stretch reads IFWLLVTLVAIYFLLTRVALP.

Belongs to the ATPase B chain family. In terms of assembly, F-type ATPases have 2 components, F(1) - the catalytic core - and F(0) - the membrane proton channel. F(1) has five subunits: alpha(3), beta(3), gamma(1), delta(1), epsilon(1). F(0) has three main subunits: a(1), b(2) and c(10-14). The alpha and beta chains form an alternating ring which encloses part of the gamma chain. F(1) is attached to F(0) by a central stalk formed by the gamma and epsilon chains, while a peripheral stalk is formed by the delta and b chains.

It is found in the cell inner membrane. F(1)F(0) ATP synthase produces ATP from ADP in the presence of a proton or sodium gradient. F-type ATPases consist of two structural domains, F(1) containing the extramembraneous catalytic core and F(0) containing the membrane proton channel, linked together by a central stalk and a peripheral stalk. During catalysis, ATP synthesis in the catalytic domain of F(1) is coupled via a rotary mechanism of the central stalk subunits to proton translocation. Its function is as follows. Component of the F(0) channel, it forms part of the peripheral stalk, linking F(1) to F(0). The b'-subunit is a diverged and duplicated form of b found in plants and photosynthetic bacteria. The sequence is that of ATP synthase subunit b 2 (atpF2) from Cereibacter sphaeroides (strain ATCC 17025 / ATH 2.4.3) (Rhodobacter sphaeroides).